Reading from the N-terminus, the 202-residue chain is Small ribosomal subunit protein uS4 (202 aa).

Positions 16–42 are disordered; sequence GELPGLSRKNPRRAYPPGQHGQARKKR. The S4 RNA-binding domain maps to 90–151; the sequence is MRLDNTVFRL…QERSRRLVEA (62 aa).

The protein belongs to the universal ribosomal protein uS4 family. As to quaternary structure, part of the 30S ribosomal subunit. Contacts protein S5. The interaction surface between S4 and S5 is involved in control of translational fidelity.

Functionally, one of the primary rRNA binding proteins, it binds directly to 16S rRNA where it nucleates assembly of the body of the 30S subunit. In terms of biological role, with S5 and S12 plays an important role in translational accuracy. This Rippkaea orientalis (strain PCC 8801 / RF-1) (Cyanothece sp. (strain PCC 8801)) protein is Small ribosomal subunit protein uS4.